Consider the following 1872-residue polypeptide: Fatty acid synthase beta subunit pkiC (1872 aa).

An acetyltransferase (AT) domain region spans residues 174-425 (VFGGQGECSR…DQSRIPFRDR (252 aa)). The interval 591 to 836 (NRVLGAPPIM…IIAATPGVSD (246 aa)) is enoyl reductase (ER) domain. The tract at residues 1111-1132 (TTPASWSTLSLTERDTSEETSD) is disordered. Residues 1158–1597 (PSHPLWMRAL…MPLEKLVVEI (440 aa)) form a dehydratase (DH) domain region. A MaoC-like domain is found at 1518-1617 (PPSNEPYAQL…CFSILAKRKE (100 aa)).

Belongs to the fungal fatty acid synthetase subunit beta family. [Alpha(6)beta(6)] hexamers of two multifunctional subunits (alpha and beta).

The enzyme catalyses acetyl-CoA + n malonyl-CoA + 2n NADPH + 4n H(+) = a long-chain-acyl-CoA + n CoA + n CO2 + 2n NADP(+).. It catalyses the reaction holo-[ACP] + acetyl-CoA = acetyl-[ACP] + CoA. The catalysed reaction is holo-[ACP] + malonyl-CoA = malonyl-[ACP] + CoA. It carries out the reaction a (3R)-hydroxyacyl-[ACP] = a (2E)-enoyl-[ACP] + H2O. The enzyme catalyses a 2,3-saturated acyl-[ACP] + NAD(+) = a (2E)-enoyl-[ACP] + NADH + H(+). It catalyses the reaction (9Z)-octadecenoyl-[ACP] + H2O = (9Z)-octadecenoate + holo-[ACP] + H(+). It functions in the pathway secondary metabolite biosynthesis. In terms of biological role, fatty acid synthase beta subunit; part of the pki gene cluster that mediates the biosynthesis of 2,4-dihydroxy-3-methyl-6-(2-oxoundecyl)benzaldehyde. The first step in the pathway is the generation of the decanoyl starter unit by the FAS composed of subunits pkiB and pkiC, which is then transferred directly from the FAS to the SAT domain of the non-reducing polyketide synthase pkiA. PkiA condenses the decanoyyl starter unit with 4 malonyl-CoA units and performs one methylation step to yield 2,4-dihydroxy-3-methyl-6-(2-oxoundecyl)benzaldehyde. In Emericella nidulans (strain FGSC A4 / ATCC 38163 / CBS 112.46 / NRRL 194 / M139) (Aspergillus nidulans), this protein is Fatty acid synthase beta subunit pkiC.